The chain runs to 540 residues: Phosphoenolpyruvate carboxykinase (ATP) (540 aa).

R65 is a binding site for substrate. Residue K87 is modified to N6-acetyllysine. Substrate contacts are provided by Y207 and K213. Residues K213, H232, and 248–256 (GLSGTGKTT) contribute to the ATP site. Mn(2+) contacts are provided by K213 and H232. Position 269 (D269) interacts with Mn(2+). Residues E297, R333, 449-450 (RI), and T455 contribute to the ATP site. R333 contributes to the substrate binding site. An N6-acetyllysine modification is found at K523.

Belongs to the phosphoenolpyruvate carboxykinase (ATP) family. In terms of assembly, monomer. Requires Mn(2+) as cofactor.

It is found in the cytoplasm. The enzyme catalyses oxaloacetate + ATP = phosphoenolpyruvate + ADP + CO2. It functions in the pathway carbohydrate biosynthesis; gluconeogenesis. Its function is as follows. Involved in the gluconeogenesis. Catalyzes the conversion of oxaloacetate (OAA) to phosphoenolpyruvate (PEP) through direct phosphoryl transfer between the nucleoside triphosphate and OAA. The chain is Phosphoenolpyruvate carboxykinase (ATP) from Escherichia fergusonii (strain ATCC 35469 / DSM 13698 / CCUG 18766 / IAM 14443 / JCM 21226 / LMG 7866 / NBRC 102419 / NCTC 12128 / CDC 0568-73).